Consider the following 306-residue polypeptide: tRNA dimethylallyltransferase (306 aa).

An ATP-binding site is contributed by 6 to 13 (GPTASGKS). 8-13 (TASGKS) contributes to the substrate binding site.

Belongs to the IPP transferase family. Monomer. Requires Mg(2+) as cofactor.

It carries out the reaction adenosine(37) in tRNA + dimethylallyl diphosphate = N(6)-dimethylallyladenosine(37) in tRNA + diphosphate. Functionally, catalyzes the transfer of a dimethylallyl group onto the adenine at position 37 in tRNAs that read codons beginning with uridine, leading to the formation of N6-(dimethylallyl)adenosine (i(6)A). This Sphingopyxis alaskensis (strain DSM 13593 / LMG 18877 / RB2256) (Sphingomonas alaskensis) protein is tRNA dimethylallyltransferase.